Consider the following 77-residue polypeptide: UPF0337 protein CE0198 (77 aa).

Residues 1 to 77 form a disordered region; it reads MGDLSNKAEG…PDVEHPEAVN (77 aa). Composition is skewed to basic and acidic residues over residues 30–56 and 64–77; these read DEGRADQTKADIKEAVSDAGDKIKDGA and QDKDPDVEHPEAVN.

Belongs to the UPF0337 (CsbD) family.

In Corynebacterium efficiens (strain DSM 44549 / YS-314 / AJ 12310 / JCM 11189 / NBRC 100395), this protein is UPF0337 protein CE0198.